Consider the following 202-residue polypeptide: Neurensin-2 (202 aa).

2 helical membrane passes run 65-85 (VAVASLFLLLGVAALTTGYAV) and 116-136 (VVGATLCGVAGIMLAVCLFLI). The disordered stretch occupies residues 162-202 (RDEPEKLSPAFHETSSQSPFLTPPSPFGQQSVQTSQPQRDL). Polar residues predominate over residues 188–202 (FGQQSVQTSQPQRDL).

Belongs to the VMP family. Expressed specifically in brain where it is widely expressed, with highest levels of expression in thalamus and hypothalamus. In brain, found in neural cell bodies and detected in many regions of the limbic system, such as the septum nucleus, horizontal and vertical limbs of the diagonal band, hippocampus, amygdaloid nucleus, and habernula nucleus. Also localizes to small vesicles found in the perinuclear region of Neuro2a and PC12 cells.

It localises to the membrane. In terms of biological role, may play a role in maintenance and/or transport of vesicles. The protein is Neurensin-2 of Mus musculus (Mouse).